The following is a 578-amino-acid chain: Cyclin-SDS (578 aa).

Residues 1–31 (MKEIAMRNSKRKPEPTPFAGKKLRSTRLRRK) form a disordered region. A compositionally biased stretch (basic residues) spans 21-31 (KKLRSTRLRRK).

Belongs to the cyclin family. May interact with CDKA-1 and CDKB1-1.

In terms of biological role, meiosis-specific cyclin. Required for normal homolog synapsis and recombination in early to mid-prophase 1. May regulate the timing of sister chromatid separation. In Arabidopsis thaliana (Mouse-ear cress), this protein is Cyclin-SDS (SDS).